We begin with the raw amino-acid sequence, 477 residues long: Aspartyl/glutamyl-tRNA(Asn/Gln) amidotransferase subunit B (477 aa).

This sequence belongs to the GatB/GatE family. GatB subfamily. As to quaternary structure, heterotrimer of A, B and C subunits.

It carries out the reaction L-glutamyl-tRNA(Gln) + L-glutamine + ATP + H2O = L-glutaminyl-tRNA(Gln) + L-glutamate + ADP + phosphate + H(+). The enzyme catalyses L-aspartyl-tRNA(Asn) + L-glutamine + ATP + H2O = L-asparaginyl-tRNA(Asn) + L-glutamate + ADP + phosphate + 2 H(+). Its function is as follows. Allows the formation of correctly charged Asn-tRNA(Asn) or Gln-tRNA(Gln) through the transamidation of misacylated Asp-tRNA(Asn) or Glu-tRNA(Gln) in organisms which lack either or both of asparaginyl-tRNA or glutaminyl-tRNA synthetases. The reaction takes place in the presence of glutamine and ATP through an activated phospho-Asp-tRNA(Asn) or phospho-Glu-tRNA(Gln). The protein is Aspartyl/glutamyl-tRNA(Asn/Gln) amidotransferase subunit B of Lawsonia intracellularis (strain PHE/MN1-00).